The sequence spans 282 residues: 3-hydroxyanthranilate 3,4-dioxygenase (282 aa).

The interval methionine 1–aspartate 160 is domain A (catalytic). Arginine 43 is a binding site for O2. Residues histidine 47, glutamate 53, and histidine 91 each coordinate Fe cation. Glutamate 53 is a binding site for substrate. Arginine 95 and glutamate 105 together coordinate substrate. The interval proline 161–valine 177 is linker. Residues methionine 178 to methionine 282 form a domain B region.

Belongs to the 3-HAO family. As to quaternary structure, monomer. Fe(2+) serves as cofactor.

Its subcellular location is the cytoplasm. It is found in the cytosol. The enzyme catalyses 3-hydroxyanthranilate + O2 = (2Z,4Z)-2-amino-3-carboxymuconate 6-semialdehyde. It functions in the pathway cofactor biosynthesis; NAD(+) biosynthesis; quinolinate from L-kynurenine: step 3/3. Its function is as follows. Catalyzes the oxidative ring opening of 3-hydroxyanthranilate to 2-amino-3-carboxymuconate semialdehyde, which spontaneously cyclizes to quinolinate. This is 3-hydroxyanthranilate 3,4-dioxygenase (haao) from Xenopus laevis (African clawed frog).